The chain runs to 1595 residues: MGVPTKISILGRESIVADFGIWRNYVAKDLLSSCSSSTYILISDTNLTPLYLEGFQRSFEDAATNVSPKPRLLTYEIPPGESSKSRETKADIEDWMLARQPPCGRDTVIIALGGGVIGDLIGFVAATYMRGVRFVQVPTTLLAMVDSSIGGKTAIDTPNGKNLIGAIWQPQRIYLDMEFLNTLPEREFINGMAEVIKTAAISSEEKFAALERDAETILAAVKSKNTPERPRFSGIEETLKRTILSSAEFKAQVVTADEREGGLRNLLNFGHSIGHSIEAILAPQVLHGECVSIGMVKEAELARHLGILNNVSVSRISKCLASYGLPTSLKDQRIKKLTAGKHCSVEQLIAYMGVDKKNDGPKKKVVLLSAIGRTHEPRASTVSNEEIQIVLAPSIEVSPGVPKGLDVTCTPPGSKSISNRALVLAALGSGTCRLKNLLHSDDTEVMLNALERLGAATFSWEDEGEVLVVSGKGGRMEASPSELYLGNAGTASRFLTTVATLARKSSVDSSVLTGNARMKQRPIGDLVDALAANGASIEYLENLGCLPLKIAASGGFAGGEINLAAKVSSQYVSSLLMCAPYAKTPVTLRLMGGKPISQSYIDMTTAMMRSFGVEVKKSETEEHTYHIPLGFYTNPVEYIVESDASSATYPLAAAAITGTSCTVPNIGSKSLQGDARFAVDVLRPMGCAVDQSDFSTRVTGPPGGILSPLPNIDMEPMTDAFLTASVLASVARGKGSNHTTRIFGIANQRVKECNRIKAMKDELAQFGVVCREHDDGLEIDGIDRATLHHPSDGVYCYDDHRVAMSFSVLSLVTPEPTLILEKECVGKTWPGWWDSLAQTFKVKLDGKEVGKRIETNPIVHVNKSAASIFIIGMRGAGKTTSGFWVSKALQRPFIDLDDELERTEGMTIPEIIKQRGWGGFREAELSLLRRVMTEKPTGYIFACGGGVVETPEARKLLTQYHKTTGNVILVMRDIKEIMDFLKIDKTRPAYVEDMMSVWLRRKPWYEECSNVQYYSRLTGLDGMTQVSGGFNRFLKVITGEVDSLAKMRRKENTFFVSLTLPDLGLAAHILKEVTLGSDAVELRVDLLKDPQSDNEIPSVDYVAEQISVLRSRASVPLVFTIRTKGQGGRFPDDAYDAALQLYRLAVRMGSEFVDLEISFPEQLLRTVTEMKGFSKIIASHHDPKGQLSWVNGSWIQFYNKALQYGDVIKLVGVARSIDDNISLKKFKTWAEEKHNVPIIAINMGDKGQLSRMLNGFMTPVSHPSLPFKAAPGQLSAREIRKGLSLIGEIKAKKFAVIGNPVSASRSPAMHNTLFRQMGLPHTYGTLETDNPEVAKEFIRSPDFGGASVTIPLKLSIMPLLDEIAPEAMSIGAVNTIVCAPPAPDGKSQTPRLIGHNTDWQGMVRCLSDAGAYAAATPTTASAGLVIGGGGTARAAIFALQNMGYSPIYVLGRSPDKLSSMTSTFHTDHDIRILEDLKALESLPTVAIGTIPGDKPIEPHMREILCRLFDLCEKANSDTEQARGVSTKRILLEMAYKPSVTSLMQLASDSGWTVLPGLEALVAQGVYQCEYWTNITPVYEYARNAVMGVLPSEDIS.

The 3-dehydroquinate synthase stretch occupies residues 1 to 384 (MGVPTKISIL…HEPRASTVSN (384 aa)). NAD(+) is bound by residues 44–46 (DTN), 81–84 (ESSK), 114–116 (GGV), and D119. R130 provides a ligand contact to 7-phospho-2-dehydro-3-deoxy-D-arabino-heptonate. Residue 139 to 140 (TT) participates in NAD(+) binding. 7-phospho-2-dehydro-3-deoxy-D-arabino-heptonate-binding residues include D146 and K152. An NAD(+)-binding site is contributed by K161. N162 is a binding site for 7-phospho-2-dehydro-3-deoxy-D-arabino-heptonate. Residues 179 to 182 (FLNT) and N190 each bind NAD(+). E194 contributes to the Zn(2+) binding site. 7-phospho-2-dehydro-3-deoxy-D-arabino-heptonate contacts are provided by residues 194-197 (EVIK) and K250. E260 functions as the Proton acceptor; for 3-dehydroquinate synthase activity in the catalytic mechanism. 7-phospho-2-dehydro-3-deoxy-D-arabino-heptonate contacts are provided by residues 264–268 (RNLLN) and H271. A Zn(2+)-binding site is contributed by H271. H275 functions as the Proton acceptor; for 3-dehydroquinate synthase activity in the catalytic mechanism. 7-phospho-2-dehydro-3-deoxy-D-arabino-heptonate-binding residues include H287 and K356. H287 serves as a coordination point for Zn(2+). The segment at 397–842 (VSPGVPKGLD…WDSLAQTFKV (446 aa)) is EPSP synthase. Catalysis depends on C824, which acts as the For EPSP synthase activity. A shikimate kinase region spans residues 866–1057 (ASIFIIGMRG…RRKENTFFVS (192 aa)). Position 872–879 (872–879 (GMRGAGKT)) interacts with ATP. The interval 1058–1278 (LTLPDLGLAA…AAPGQLSARE (221 aa)) is 3-dehydroquinase. H1181 acts as the Proton acceptor; for 3-dehydroquinate dehydratase activity in catalysis. The active-site Schiff-base intermediate with substrate; for 3-dehydroquinate dehydratase activity is the K1209. The tract at residues 1291-1595 (AKKFAVIGNP…MGVLPSEDIS (305 aa)) is shikimate dehydrogenase.

The protein in the N-terminal section; belongs to the sugar phosphate cyclases superfamily. Dehydroquinate synthase family. It in the 2nd section; belongs to the EPSP synthase family. This sequence in the 3rd section; belongs to the shikimate kinase family. In the 4th section; belongs to the type-I 3-dehydroquinase family. The protein in the C-terminal section; belongs to the shikimate dehydrogenase family. As to quaternary structure, homodimer. Requires Zn(2+) as cofactor.

It localises to the cytoplasm. It catalyses the reaction 7-phospho-2-dehydro-3-deoxy-D-arabino-heptonate = 3-dehydroquinate + phosphate. It carries out the reaction 3-dehydroquinate = 3-dehydroshikimate + H2O. The catalysed reaction is shikimate + NADP(+) = 3-dehydroshikimate + NADPH + H(+). The enzyme catalyses shikimate + ATP = 3-phosphoshikimate + ADP + H(+). It catalyses the reaction 3-phosphoshikimate + phosphoenolpyruvate = 5-O-(1-carboxyvinyl)-3-phosphoshikimate + phosphate. It functions in the pathway metabolic intermediate biosynthesis; chorismate biosynthesis; chorismate from D-erythrose 4-phosphate and phosphoenolpyruvate: step 2/7. The protein operates within metabolic intermediate biosynthesis; chorismate biosynthesis; chorismate from D-erythrose 4-phosphate and phosphoenolpyruvate: step 3/7. It participates in metabolic intermediate biosynthesis; chorismate biosynthesis; chorismate from D-erythrose 4-phosphate and phosphoenolpyruvate: step 4/7. Its pathway is metabolic intermediate biosynthesis; chorismate biosynthesis; chorismate from D-erythrose 4-phosphate and phosphoenolpyruvate: step 5/7. It functions in the pathway metabolic intermediate biosynthesis; chorismate biosynthesis; chorismate from D-erythrose 4-phosphate and phosphoenolpyruvate: step 6/7. Its function is as follows. The AROM polypeptide catalyzes 5 consecutive enzymatic reactions in prechorismate polyaromatic amino acid biosynthesis. The polypeptide is Pentafunctional AROM polypeptide (Ajellomyces capsulatus (strain H143) (Darling's disease fungus)).